The following is a 167-amino-acid chain: Zymogen granule membrane protein 16 (167 aa).

A signal peptide spans 1–16 (MLAIALLVLLCASASA). Residues 24-159 (SSYSGEYGGK…IDAISLHWDT (136 aa)) form the Jacalin-type lectin domain.

Belongs to the jacalin lectin family. As to expression, expressed in pancreas, colon, duodenum, and much less in stomach.

The protein localises to the secreted. The protein resides in the extracellular space. It is found in the extracellular matrix. It localises to the zymogen granule lumen. Its subcellular location is the golgi apparatus lumen. Functionally, may play a role in protein trafficking. May act as a linker molecule between the submembranous matrix on the luminal side of zymogen granule membrane (ZGM) and aggregated secretory proteins during granule formation in the TGN. The sequence is that of Zymogen granule membrane protein 16 (Zg16) from Rattus norvegicus (Rat).